The sequence spans 489 residues: Transmembrane protein 161A (489 aa).

A signal peptide spans 1 to 23 (MAVMGIQMVVTLLVASLMQRVSP). Residues 24 to 98 (HYSFGRWLLC…INTMDALVLR (75 aa)) lie on the Extracellular side of the membrane. N-linked (GlcNAc...) asparagine glycosylation occurs at asparagine 34. A helical transmembrane segment spans residues 99–119 (YFLEYQWFIDFALYSTIIYLF). Over 120–134 (TEAYYCVVDAQNEIN) the chain is Cytoplasmic. A helical membrane pass occupies residues 135–155 (IGVLWCLMSIIFSIKVLFTVM). At 156-166 (KHYFRSEEGGE) the chain is on the extracellular side. Residues 167–187 (RSVCMTFAFFFLLIAMIVTIV) form a helical membrane-spanning segment. Residues 188 to 224 (RDEYLEFGLEPGLASVCHNLENFLAQQGWQWSMPFVK) lie on the Cytoplasmic side of the membrane. A helical membrane pass occupies residues 225-245 (LAFKIALVALCAFLGGCLTFP). At 246–264 (GLRLAQTHLDALKMAADRP) the chain is on the extracellular side. A helical transmembrane segment spans residues 265–285 (MLQLLLHMSFLPPVIVVVLWI). Residues 286–304 (RPITRDFLLNAPMGKESVE) are Cytoplasmic-facing. A helical transmembrane segment spans residues 305–325 (LMSNSAYNTFRLWIIVLLCLL). Residues 326-370 (RFCLTRFHLQAYLCLADRWVEQMKREAGRISMLEIQRKISRIFCY) are Extracellular-facing. Residues 371–391 (LTVVALQYLAPVILTFHCVFM) form a helical membrane-spanning segment. Over 392-459 (LKSLGDYSWG…GLFTPLFFRG (68 aa)) the chain is Cytoplasmic. Residues 413 to 432 (VDSSPVQSHSPTSEEEEDTE) are disordered. A helical transmembrane segment spans residues 460-480 (IFSFLTWWVSVCQIITSLFGL). Over 481–489 (YFHQYLGAS) the chain is Extracellular.

Belongs to the TMEM161 family.

Its subcellular location is the membrane. In terms of biological role, may play a role in protection against oxidative stress. In Xenopus laevis (African clawed frog), this protein is Transmembrane protein 161A (tmem161a).